Consider the following 400-residue polypeptide: Aspartate/prephenate aminotransferase (400 aa).

Residues G39, W125, and N175 each contribute to the L-aspartate site. Position 239 is an N6-(pyridoxal phosphate)lysine (K239). R375 is a binding site for L-aspartate.

Belongs to the class-I pyridoxal-phosphate-dependent aminotransferase family. In terms of assembly, homodimer. The cofactor is pyridoxal 5'-phosphate.

It localises to the cytoplasm. The enzyme catalyses L-aspartate + 2-oxoglutarate = oxaloacetate + L-glutamate. It catalyses the reaction L-arogenate + 2-oxoglutarate = prephenate + L-glutamate. Its function is as follows. Catalyzes the reversible conversion of aspartate and 2-oxoglutarate to glutamate and oxaloacetate. Can also transaminate prephenate in the presence of glutamate. Required for symbiotic nitrogen fixation. This is Aspartate/prephenate aminotransferase from Rhizobium meliloti (strain 1021) (Ensifer meliloti).